We begin with the raw amino-acid sequence, 198 residues long: MEHYISLFVKSVFIENMALSFFLGMCTFLAVSKKVSTAFGLGIAVIVVLGIAVPVNQLVYSFILKDSALVQGIDLSFLNFITFIGVIAALVQILEMVLDKYFPALYNALGIFLPLITVNCAIFGGVSFMVQRDYTFVESVVYGIGAGTGWMLAIVALAGITEKMKYADVPAGLRGLGITFITVGLMALGFMSFSGIQL.

A run of 6 helical transmembrane segments spans residues Ser-11 to Val-31, Val-35 to Val-55, Phe-77 to Val-97, Gly-110 to Val-130, Val-140 to Ile-160, and Leu-176 to Ile-196.

This sequence belongs to the NqrDE/RnfAE family. Composed of six subunits; NqrA, NqrB, NqrC, NqrD, NqrE and NqrF.

The protein localises to the cell inner membrane. It carries out the reaction a ubiquinone + n Na(+)(in) + NADH + H(+) = a ubiquinol + n Na(+)(out) + NAD(+). Its function is as follows. NQR complex catalyzes the reduction of ubiquinone-1 to ubiquinol by two successive reactions, coupled with the transport of Na(+) ions from the cytoplasm to the periplasm. NqrA to NqrE are probably involved in the second step, the conversion of ubisemiquinone to ubiquinol. The polypeptide is Na(+)-translocating NADH-quinone reductase subunit E (Pasteurella multocida (strain Pm70)).